The primary structure comprises 107 residues: SH3 domain-binding glutamic acid-rich-like protein 2 (107 aa).

The SH3-binding motif lies at 61 to 67; that stretch reads QGNPLPP.

It belongs to the SH3BGR family.

The protein resides in the nucleus. This chain is SH3 domain-binding glutamic acid-rich-like protein 2 (SH3BGRL2), found in Bos taurus (Bovine).